A 555-amino-acid chain; its full sequence is Oxygen-dependent choline dehydrogenase (555 aa).

An FAD-binding site is contributed by Asp-4–Glu-33. Catalysis depends on His-473, which acts as the Proton acceptor.

Belongs to the GMC oxidoreductase family. It depends on FAD as a cofactor.

It catalyses the reaction choline + A = betaine aldehyde + AH2. It carries out the reaction betaine aldehyde + NAD(+) + H2O = glycine betaine + NADH + 2 H(+). The protein operates within amine and polyamine biosynthesis; betaine biosynthesis via choline pathway; betaine aldehyde from choline (cytochrome c reductase route): step 1/1. Its function is as follows. Involved in the biosynthesis of the osmoprotectant glycine betaine. Catalyzes the oxidation of choline to betaine aldehyde and betaine aldehyde to glycine betaine at the same rate. The polypeptide is Oxygen-dependent choline dehydrogenase (Proteus mirabilis (strain HI4320)).